The following is a 353-amino-acid chain: Guanine nucleotide-binding protein G(q) subunit alpha (353 aa).

Residues cysteine 3 and cysteine 4 are each lipidated (S-palmitoyl cysteine). One can recognise a G-alpha domain in the interval 32–353; that stretch reads RELKLLLLGT…QLNLKEYNLV (322 aa). Positions 35-48 are G1 motif; that stretch reads KLLLLGTGESGKST. Residues 40–47, 174–180, 199–203, 268–271, and alanine 325 contribute to the GTP site; these read GTGESGKS, LRVRVPT, DVGGQ, and NKKD. Mg(2+)-binding residues include serine 47 and threonine 180. The tract at residues 172–180 is G2 motif; that stretch reads DILRVRVPT. A G3 motif region spans residues 195–204; it reads FRMVDVGGQR. A G4 motif region spans residues 264–271; the sequence is ILFLNKKD. Residues 323-328 are G5 motif; the sequence is TCATDT.

Belongs to the G-alpha family. G(q) subfamily. G proteins are composed of 3 units; alpha, beta and gamma. The alpha chain contains the guanine nucleotide binding site.

Guanine nucleotide-binding proteins (G proteins) are involved as modulators or transducers in various transmembrane signaling systems. The sequence is that of Guanine nucleotide-binding protein G(q) subunit alpha (SCGQA) from Mizuhopecten yessoensis (Japanese scallop).